Reading from the N-terminus, the 221-residue chain is Glutathione peroxidase (221 aa).

The N-terminal stretch at 1-19 is a signal peptide; that stretch reads MFIQLLILSYAILLQLIAT. Asparagine 28 carries an N-linked (GlcNAc...) asparagine glycan. The active site involves cysteine 72. 2 N-linked (GlcNAc...) asparagine glycosylation sites follow: asparagine 87 and asparagine 90.

It belongs to the glutathione peroxidase family. As to quaternary structure, homotetramer.

The protein localises to the secreted. The protein resides in the extracellular space. It catalyses the reaction 2 glutathione + H2O2 = glutathione disulfide + 2 H2O. This chain is Glutathione peroxidase, found in Dirofilaria immitis (Canine heartworm).